A 733-amino-acid chain; its full sequence is Hypermethylated in cancer 1 protein (733 aa).

In terms of domain architecture, BTB spans 47 to 110 (CDVIIVVQNA…IYTGRLADGA (64 aa)). Residues 154-315 (KYCHLRGGGG…PFRGGSGSPG (162 aa)) are mediates HDAC-dependent transcriptional repression. At R159 the chain carries Omega-N-methylarginine. Residues 189–209 (YPSPVGPPPPPAAEPPSGPEA) are disordered. Residues 192–206 (PVGPPPPPAAEPPSG) are compositionally biased toward pro residues. Phosphoserine is present on S237. Residues 241–247 (GLDLSKK) form an interaction with CTBP1 region. The tract at residues 241-421 (GLDLSKKSPP…PGGHLEGYPC (181 aa)) is disordered. S248 bears the Phosphoserine mark. Pro residues predominate over residues 284 to 293 (LALPSLPPLP). K333 is modified (N6-acetyllysine; alternate). K333 is covalently cross-linked (Glycyl lysine isopeptide (Lys-Gly) (interchain with G-Cter in SUMO); alternate). The span at 344 to 361 (ELGRERGSPSERCEERGG) shows a compositional bias: basic and acidic residues. The residue at position 366 (S366) is a Phosphoserine. The span at 368–380 (GGPPLGLAPPPRY) shows a compositional bias: pro residues. 5 consecutive C2H2-type zinc fingers follow at residues 439–459 (CIPC…VEAH), 509–529 (CASC…EKTH), 537–557 (CTIC…MRSH), 565–585 (CDAC…MRIH), and 593–613 (CQVC…MKMH). Position 704 is a phosphoserine (S704).

This sequence belongs to the krueppel C2H2-type zinc-finger protein family. Hic subfamily. In terms of assembly, self-associates. Interacts with HIC2. Interacts with CTBP1 and CTBP2. Interacts with TCF7L2 and ARID1A. Interacts with MTA1 and MBD3; indicative for an association with the NuRD complex. Interacts with SIRT1. Acetylated on several residues, including Lys-333. Lys-333 is deacetylated by SIRT1. In terms of processing, sumoylated on Lys-333 by a PIAS family member, which enhances interaction with MTA1, positively regulates transcriptional repression activity and is enhanced by HDAC4. As to expression, ubiquitously expressed with highest levels found in lung, colon, prostate, thymus, testis and ovary. Expression is absent or decreased in many tumor cells.

The protein resides in the nucleus. Functionally, transcriptional repressor. Recognizes and binds to the consensus sequence '5-[CG]NG[CG]GGGCA[CA]CC-3'. May act as a tumor suppressor. Involved in development of head, face, limbs and ventral body wall. Involved in down-regulation of SIRT1 and thereby is involved in regulation of p53/TP53-dependent apoptotic DNA-damage responses. The specific target gene promoter association seems to be depend on corepressors, such as CTBP1 or CTBP2 and MTA1. In cooperation with MTA1 (indicative for an association with the NuRD complex) represses transcription from CCND1/cyclin-D1 and CDKN1C/p57Kip2 specifically in quiescent cells. Involved in regulation of the Wnt signaling pathway probably by association with TCF7L2 and preventing TCF7L2 and CTNNB1 association with promoters of TCF-responsive genes. Seems to repress transcription from E2F1 and ATOH1 which involves ARID1A, indicative for the participation of a distinct SWI/SNF-type chromatin-remodeling complex. Probably represses transcription of ACKR3, FGFBP1 and EFNA1. In Homo sapiens (Human), this protein is Hypermethylated in cancer 1 protein (HIC1).